A 464-amino-acid polypeptide reads, in one-letter code: MIPVQGLRGATVAVLGLGRTGMSAARALRAGGALPLCWDDNPDARARAQQEGFTCTQLSRVADFDDIACLIVSPGIPHLYPAPNPVVRLALQAGVPVDNDIGLFFRSFATNAWANFDTAPRVVAVTGSNGKSTTSALIHHILEHVGRPATLAGNIGRGVLDIDPPHDGEVVVLELSSYQTDLARSLTPDVAVFTNLSEDHLDRHGGMGGYFAAKRRLFAEGGPDRAIVGVDEDEGLFLAGQLAEGRADDRVIRISFAQKLTGPGWQVFARKGFLSEYRKGKQIASVDLRSVPGLPGVHNHQNACAAYAVCRSLGLAPKVIEAALHSFQGLPHRSQLVGQKDGVRFVNDSKATNADAAAKALAAFPSIRWICGGLEKDGGMDALRNASASVVKAYVIGREAAAFAMKLPVEAEICTTMAQAVEKAAREAEAGDVVLLAPAAASFDQYDNFEQRGDDFMQEVAKYL.

Gly-127–Thr-133 lines the ATP pocket.

Belongs to the MurCDEF family.

Its subcellular location is the cytoplasm. It catalyses the reaction UDP-N-acetyl-alpha-D-muramoyl-L-alanine + D-glutamate + ATP = UDP-N-acetyl-alpha-D-muramoyl-L-alanyl-D-glutamate + ADP + phosphate + H(+). Its pathway is cell wall biogenesis; peptidoglycan biosynthesis. Cell wall formation. Catalyzes the addition of glutamate to the nucleotide precursor UDP-N-acetylmuramoyl-L-alanine (UMA). This Roseobacter denitrificans (strain ATCC 33942 / OCh 114) (Erythrobacter sp. (strain OCh 114)) protein is UDP-N-acetylmuramoylalanine--D-glutamate ligase.